The following is a 532-amino-acid chain: Probable galacturonosyltransferase 14 (532 aa).

The Cytoplasmic portion of the chain corresponds to 1 to 40 (MQLHISPSMRSITISSSNEFIDLMKIKVAARHISYRTLFH). The helical; Signal-anchor for type II membrane protein transmembrane segment at 41–61 (TILILAFLLPFVFILTAVVTL) threads the bilayer. Residues 62–532 (EGVNKCSSID…DFIKNCHILE (471 aa)) lie on the Lumenal side of the membrane. Residues N305, N395, N444, and N519 are each glycosylated (N-linked (GlcNAc...) asparagine).

This sequence belongs to the glycosyltransferase 8 family. As to expression, expressed in roots, inflorescences, siliques, leaves and stems. Accumulates in pollen grains.

It localises to the golgi apparatus membrane. It participates in glycan metabolism; pectin biosynthesis. In terms of biological role, may be involved in pectin and/or xylans biosynthesis in cell walls. Together with GAUT13, required for pollen tube growth, possibly through the regulation of pectin biosynthesis and repartition in the pollen tube wall. The polypeptide is Probable galacturonosyltransferase 14 (Arabidopsis thaliana (Mouse-ear cress)).